A 406-amino-acid chain; its full sequence is Cysteine desulfurase (406 aa).

Lys-226 is subject to N6-(pyridoxal phosphate)lysine. The active-site Cysteine persulfide intermediate is Cys-364.

It belongs to the class-V pyridoxal-phosphate-dependent aminotransferase family. Csd subfamily. Homodimer. Interacts with SufE and the SufBCD complex composed of SufB, SufC and SufD. The interaction with SufE is required to mediate the direct transfer of the sulfur atom from the S-sulfanylcysteine. Pyridoxal 5'-phosphate serves as cofactor.

It localises to the cytoplasm. It catalyses the reaction (sulfur carrier)-H + L-cysteine = (sulfur carrier)-SH + L-alanine. The catalysed reaction is L-selenocysteine + AH2 = hydrogenselenide + L-alanine + A + H(+). It functions in the pathway cofactor biosynthesis; iron-sulfur cluster biosynthesis. Cysteine desulfurases mobilize the sulfur from L-cysteine to yield L-alanine, an essential step in sulfur metabolism for biosynthesis of a variety of sulfur-containing biomolecules. Component of the suf operon, which is activated and required under specific conditions such as oxidative stress and iron limitation. Acts as a potent selenocysteine lyase in vitro, that mobilizes selenium from L-selenocysteine. Selenocysteine lyase activity is however unsure in vivo. The protein is Cysteine desulfurase of Escherichia coli O7:K1 (strain IAI39 / ExPEC).